A 445-amino-acid chain; its full sequence is Chromosome partition protein MukF (445 aa).

The interval 212–240 (LDETSGNLRELQDTLNAAGDKLQEQLLRI) is leucine-zipper.

It belongs to the MukF family. In terms of assembly, interacts, and probably forms a ternary complex, with MukE and MukB via its C-terminal region. The complex formation is stimulated by calcium or magnesium. It is required for an interaction between MukE and MukB.

It is found in the cytoplasm. The protein localises to the nucleoid. In terms of biological role, involved in chromosome condensation, segregation and cell cycle progression. May participate in facilitating chromosome segregation by condensation DNA from both sides of a centrally located replisome during cell division. Not required for mini-F plasmid partitioning. Probably acts via its interaction with MukB and MukE. Overexpression results in anucleate cells. It has a calcium binding activity. The polypeptide is Chromosome partition protein MukF (Mannheimia succiniciproducens (strain KCTC 0769BP / MBEL55E)).